Reading from the N-terminus, the 193-residue chain is Xanthine phosphoribosyltransferase (193 aa).

2 residues coordinate xanthine: Leu-20 and Asn-27. Residue 128–132 coordinates 5-phospho-alpha-D-ribose 1-diphosphate; it reads ANGDA. Lys-156 is a xanthine binding site.

Belongs to the purine/pyrimidine phosphoribosyltransferase family. Xpt subfamily. As to quaternary structure, homodimer.

The protein localises to the cytoplasm. It catalyses the reaction XMP + diphosphate = xanthine + 5-phospho-alpha-D-ribose 1-diphosphate. The protein operates within purine metabolism; XMP biosynthesis via salvage pathway; XMP from xanthine: step 1/1. In terms of biological role, converts the preformed base xanthine, a product of nucleic acid breakdown, to xanthosine 5'-monophosphate (XMP), so it can be reused for RNA or DNA synthesis. The chain is Xanthine phosphoribosyltransferase from Staphylococcus haemolyticus (strain JCSC1435).